The following is a 521-amino-acid chain: MQRKEANPFQILGLRPWLVKQLTKLGLKGATPIQQKCIPAILAGQDCIGAAKTGSGKTFAFALPILERLSEEPVSHFALVLTPTHELAYQISEQFLVAGQAMGVRVCVVSGGTDQMVESQKLMQRPHIVVAMPGRLADHLTGCDTFSFDNLKYLVVDEADRMLNGDFDESLSIIERCLPKTRQNLFFSATMKDFIKESSIFPIASDCFEWSQDSDVATVETLDQRYLLCADYDRDMVLIEALRKYREENENANVMIFTNTKKYCQLLSMTLKNMEIDNVCLHGFMRQKERVAALSRFKSNQIRTLIATDVAARGLDIPSVELVMNHMLPRTPKEYIHRVGRTARAGRKGMSISIFRFPRDLELLAAIEEEINTKLTEHPIDQRMVERIFMQVNVTRRESEMQLDNNDFDERAQNYRRKTWIMEGKDPDQMEALYRKKQKDKLREIRRKRKLQHAEPAASEEGKALLQDERFKSVDSARFEKKGKGRSRATQEDTPTKPLKRLNKEKPVAQKGRADVKKDKA.

A Q motif motif is present at residues 7–35 (NPFQILGLRPWLVKQLTKLGLKGATPIQQ). Residues 38–209 (IPAILAGQDC…IFPIASDCFE (172 aa)) enclose the Helicase ATP-binding domain. 51-58 (AKTGSGKT) serves as a coordination point for ATP. Positions 157 to 160 (DEAD) match the DEAD box motif. The 150-residue stretch at 237–386 (VLIEALRKYR…EHPIDQRMVE (150 aa)) folds into the Helicase C-terminal domain. A disordered region spans residues 448-521 (KRKLQHAEPA…GRADVKKDKA (74 aa)). 2 stretches are compositionally biased toward basic and acidic residues: residues 460–482 (EEGK…FEKK) and 502–521 (LNKE…KDKA).

Belongs to the DEAD box helicase family. DDX49/DBP8 subfamily.

The enzyme catalyses ATP + H2O = ADP + phosphate + H(+). Probable ATP-binding RNA helicase. The chain is Probable ATP-dependent RNA helicase Dbp45A (Dbp45A) from Drosophila melanogaster (Fruit fly).